The following is a 254-amino-acid chain: Serotonin N-acetyltransferase 1, chloroplastic (254 aa).

Residues 1-83 (MASAASASAS…NSTETVEPPS (83 aa)) constitute a chloroplast transit peptide. The region spanning 119 to 254 (VNVYDLQALC…IKGMFWYPRF (136 aa)) is the N-acetyltransferase domain.

It localises to the plastid. The protein localises to the chloroplast. The protein resides in the nucleus. The enzyme catalyses a 2-arylethylamine + acetyl-CoA = an N-acetyl-2-arylethylamine + CoA + H(+). It participates in aromatic compound metabolism; melatonin biosynthesis; melatonin from serotonin: step 1/2. Its function is as follows. Catalyzes the N-acetylation of serotonin into N-acetylserotonin, the penultimate step in the synthesis of melatonin. Catalyzes in vitro the N-acetylation of tryptamine to produce N-acetyltryptamine, 5-methoxytryptamine to produce melatonin and tyramine to produce N-acetyltyramine. Acetyltransferase required for geminivirus infection and systemic spread. The protein is Serotonin N-acetyltransferase 1, chloroplastic of Oryza sativa subsp. indica (Rice).